Here is a 156-residue protein sequence, read N- to C-terminus: Ribosome maturation factor RimP (156 aa).

This sequence belongs to the RimP family.

The protein localises to the cytoplasm. In terms of biological role, required for maturation of 30S ribosomal subunits. The protein is Ribosome maturation factor RimP of Bacillus cereus (strain G9842).